A 572-amino-acid chain; its full sequence is Proline--tRNA ligase (572 aa).

This sequence belongs to the class-II aminoacyl-tRNA synthetase family. ProS type 1 subfamily. As to quaternary structure, homodimer.

It localises to the cytoplasm. It carries out the reaction tRNA(Pro) + L-proline + ATP = L-prolyl-tRNA(Pro) + AMP + diphosphate. In terms of biological role, catalyzes the attachment of proline to tRNA(Pro) in a two-step reaction: proline is first activated by ATP to form Pro-AMP and then transferred to the acceptor end of tRNA(Pro). As ProRS can inadvertently accommodate and process non-cognate amino acids such as alanine and cysteine, to avoid such errors it has two additional distinct editing activities against alanine. One activity is designated as 'pretransfer' editing and involves the tRNA(Pro)-independent hydrolysis of activated Ala-AMP. The other activity is designated 'posttransfer' editing and involves deacylation of mischarged Ala-tRNA(Pro). The misacylated Cys-tRNA(Pro) is not edited by ProRS. This Escherichia coli O17:K52:H18 (strain UMN026 / ExPEC) protein is Proline--tRNA ligase.